The sequence spans 496 residues: Autophagy-related protein 21 (496 aa).

Positions S41–A86 are disordered. Low complexity predominate over residues S46–S57. Over residues D75–D84 the composition is skewed to acidic residues. A Phosphothreonine modification is found at T213. Residue S237 is modified to Phosphoserine. WD repeat units lie at residues V294–S334, T346–P385, and V448–V488. Residues F342–T346 carry the L/FRRG motif motif.

This sequence belongs to the WD repeat PROPPIN family.

The protein localises to the cytoplasm. It is found in the vacuole. In terms of biological role, required for cytoplasm to vacuole transport (Cvt) vesicles formation and mitophagy. Involved in binding of phosphatidylethanolamine to ATG8 and in recruitment of ATG8 and ATG5 to the pre-autophagosomal structure. Protects ATG8 from ARG4-mediated cleavage. Essential for maturation of proaminopeptidase I. The sequence is that of Autophagy-related protein 21 (ATG21) from Saccharomyces cerevisiae (strain ATCC 204508 / S288c) (Baker's yeast).